The sequence spans 137 residues: Large ribosomal subunit protein uL16 (137 aa).

Belongs to the universal ribosomal protein uL16 family. As to quaternary structure, part of the 50S ribosomal subunit.

Functionally, binds 23S rRNA and is also seen to make contacts with the A and possibly P site tRNAs. The sequence is that of Large ribosomal subunit protein uL16 from Bartonella quintana (strain Toulouse) (Rochalimaea quintana).